Here is a 60-residue protein sequence, read N- to C-terminus: Large ribosomal subunit protein bL32 (60 aa).

It belongs to the bacterial ribosomal protein bL32 family.

The protein is Large ribosomal subunit protein bL32 of Clostridium novyi (strain NT).